Consider the following 356-residue polypeptide: LRLSLYFPISISLSLSLEAMASFIATTTPAMPAFASVLDPKIPTKPEPKTETPKPKDDLERFRTSEVVLERKAKGFWRRKWNPRDIQNAVTLLVLHALAAMAPFYFSWDAFWISFILLGFASGVLGITLCFHRCLTHGGFKLPKLVEYFFAYCGSLALQGDPMEWVSNHRYHHQFVDTERDVHSPTQGFWFCHIGWVLDKDLFVEKRGGRRNNVNDLKKQAFYRFLQKTYMYHQLALIALLYYVGGFPYIVWGMGFRLVFMFHSTFAINSVCHKWGGRPWNTGDLSTNNMFVALCAFGEGWHNNHHAFEQSARHGLEWWEIDVTWYVIRTLQAIGLATNVKLPTEAQKQKLKAKSA.

A helical membrane pass occupies residues 5–25 (LYFPISISLSLSLEAMASFIA). Residues 38 to 58 (LDPKIPTKPEPKTETPKPKDD) form a disordered region. Residues 42–58 (IPTKPEPKTETPKPKDD) show a composition bias toward basic and acidic residues. The next 2 helical transmembrane spans lie at 88–108 (NAVT…YFSW) and 111–131 (FWIS…TLCF). The Histidine box-1 motif lies at 132–137 (HRCLTH). Residues 169-173 (HRYHH) carry the Histidine box-2 motif. Residues 236–256 (ALIALLYYVGGFPYIVWGMGF) form a helical membrane-spanning segment. Residues 302-306 (HNNHH) carry the Histidine box-3 motif.

The protein belongs to the fatty acid desaturase type 1 family. The cofactor is Fe(2+).

It is found in the membrane. The catalysed reaction is eicosanoyl-CoA + 2 Fe(II)-[cytochrome b5] + O2 + 2 H(+) = (5Z)-eicosenoyl-CoA + 2 Fe(III)-[cytochrome b5] + 2 H2O. The protein operates within lipid metabolism; monounsaturated fatty acid biosynthesis. In terms of biological role, desaturase involved in the biosynthesis of (5Z)-icos-5-enoate, an unusual monounsaturated fatty acid that makes up to 60% of the total fatty acids in Limnanthes sp. seed oil. Only acts on saturated fatty acids. The sequence is that of Icosanoyl-CoA 5-desaturase from Limnanthes douglasii (Douglas' meadowfoam).